The chain runs to 379 residues: Protein RecA (379 aa).

79–86 (GPESSGKT) is a binding site for ATP.

Belongs to the RecA family.

Its subcellular location is the cytoplasm. Functionally, can catalyze the hydrolysis of ATP in the presence of single-stranded DNA, the ATP-dependent uptake of single-stranded DNA by duplex DNA, and the ATP-dependent hybridization of homologous single-stranded DNAs. It interacts with LexA causing its activation and leading to its autocatalytic cleavage. In Streptococcus agalactiae serotype III (strain NEM316), this protein is Protein RecA.